A 438-amino-acid polypeptide reads, in one-letter code: 3-phosphoshikimate 1-carboxyvinyltransferase (438 aa).

3-phosphoshikimate-binding residues include K21, S22, and R26. K21 provides a ligand contact to phosphoenolpyruvate. Residues G95 and R123 each contribute to the phosphoenolpyruvate site. 3-phosphoshikimate is bound by residues S167, Q169, D315, and K342. Residue Q169 participates in phosphoenolpyruvate binding. D315 acts as the Proton acceptor in catalysis. R346 and R387 together coordinate phosphoenolpyruvate.

Belongs to the EPSP synthase family. Monomer.

Its subcellular location is the cytoplasm. It carries out the reaction 3-phosphoshikimate + phosphoenolpyruvate = 5-O-(1-carboxyvinyl)-3-phosphoshikimate + phosphate. Its pathway is metabolic intermediate biosynthesis; chorismate biosynthesis; chorismate from D-erythrose 4-phosphate and phosphoenolpyruvate: step 6/7. Catalyzes the transfer of the enolpyruvyl moiety of phosphoenolpyruvate (PEP) to the 5-hydroxyl of shikimate-3-phosphate (S3P) to produce enolpyruvyl shikimate-3-phosphate and inorganic phosphate. The chain is 3-phosphoshikimate 1-carboxyvinyltransferase from Coxiella burnetii (strain CbuG_Q212) (Coxiella burnetii (strain Q212)).